We begin with the raw amino-acid sequence, 157 residues long: BPTI/Kunitz domain-containing protein 3 (157 aa).

An N-terminal signal peptide occupies residues 1 to 16 (MIRLVTLAALPVLVLC). 2 BPTI/Kunitz inhibitor domains span residues 42–95 (CLKY…MKSC) and 97–151 (CKQQ…FFTC). 5 disulfides stabilise this stretch: Cys-42–Cys-95, Cys-70–Cys-91, Cys-97–Cys-151, Cys-107–Cys-134, and Cys-126–Cys-147.

In terms of tissue distribution, nacreous layer of shell (at protein level).

The protein localises to the secreted. The sequence is that of BPTI/Kunitz domain-containing protein 3 from Margaritifera margaritifera (Freshwater pearl mussel).